The sequence spans 29 residues: Cyclotide mech-3 (29 aa).

Residues 1-29 (GLPTCGETCTLGKCNTPKCTCNWPICYKN) constitute a cross-link (cyclopeptide (Gly-Asn)). 3 disulfides stabilise this stretch: cysteine 5/cysteine 19, cysteine 9/cysteine 21, and cysteine 14/cysteine 26.

Post-translationally, this is a cyclic peptide. In terms of processing, contains 3 disulfide bonds.

In terms of biological role, probably participates in a plant defense mechanism (Potential). Binds to and induces leakage in phospholipd membranes, particularly ones containing 1-palmitoyl-2-oleophosphatidylethanolamine (POPE). In vitro, displays cytotoxicity against cultured cells but no hemolytic activity towards fresh erythrocytes. In Melicytus chathamicus (Chatham Island mahoe), this protein is Cyclotide mech-3.